We begin with the raw amino-acid sequence, 161 residues long: Protein-export protein SecB (161 aa).

It belongs to the SecB family. Homotetramer, a dimer of dimers. One homotetramer interacts with 1 SecA dimer.

Its subcellular location is the cytoplasm. Functionally, one of the proteins required for the normal export of preproteins out of the cell cytoplasm. It is a molecular chaperone that binds to a subset of precursor proteins, maintaining them in a translocation-competent state. It also specifically binds to its receptor SecA. This chain is Protein-export protein SecB, found in Rhodopseudomonas palustris (strain BisA53).